We begin with the raw amino-acid sequence, 273 residues long: HTH-type transcriptional activator RhaS (273 aa).

The HTH araC/xylS-type domain occupies 174–272 (YQLLDWLQNN…SQSPRDLRSQ (99 aa)). DNA-binding regions (H-T-H motif) lie at residues 191-212 (PELADRFALPLRTLHRQLKNKT) and 239-262 (VTDIAYLCGFGDSNHFSTLFKREF).

Binds DNA as a dimer.

It is found in the cytoplasm. In terms of biological role, activates expression of the rhaBAD and rhaT operons. The chain is HTH-type transcriptional activator RhaS from Yersinia pseudotuberculosis serotype O:1b (strain IP 31758).